The chain runs to 268 residues: Tryptophan synthase alpha chain (268 aa).

Residues Glu49 and Asp60 each act as proton acceptor in the active site.

The protein belongs to the TrpA family. As to quaternary structure, tetramer of two alpha and two beta chains.

It catalyses the reaction (1S,2R)-1-C-(indol-3-yl)glycerol 3-phosphate + L-serine = D-glyceraldehyde 3-phosphate + L-tryptophan + H2O. It participates in amino-acid biosynthesis; L-tryptophan biosynthesis; L-tryptophan from chorismate: step 5/5. Its function is as follows. The alpha subunit is responsible for the aldol cleavage of indoleglycerol phosphate to indole and glyceraldehyde 3-phosphate. This chain is Tryptophan synthase alpha chain, found in Erwinia tasmaniensis (strain DSM 17950 / CFBP 7177 / CIP 109463 / NCPPB 4357 / Et1/99).